The following is a 367-amino-acid chain: Putrescine-binding periplasmic protein SpuD (367 aa).

Residues 1 to 24 form the signal peptide; that stretch reads MMKRFGKTLLALTLAGSVAGMAQA. Residue 36–37 coordinates putrescine; the sequence is SD. Residues cysteine 173 and cysteine 236 are joined by a disulfide bond. The putrescine site is built by aspartate 244 and aspartate 275.

The protein belongs to the bacterial solute-binding protein PotD/PotF family.

The protein resides in the periplasm. It localises to the secreted. Putrescine-binding protein probably required for putrescine uptake into cells. Binds putrescine with high affinity, spermidine with relatively low affinity. Does not bind cadaverine or spermine. Putrescine binding induces large inter-domain conformational changes. This is Putrescine-binding periplasmic protein SpuD (spuD) from Pseudomonas aeruginosa (strain UCBPP-PA14).